The following is a 606-amino-acid chain: MACPF domain-containing protein At4g24290 (606 aa).

Positions 1 to 332 (MALRLPASKA…PPIEELHQFL (332 aa)) constitute an MACPF domain.

This sequence belongs to the complement C6/C7/C8/C9 (TC 1.C.39) family.

In terms of biological role, negatively controls the salicylic acid (SA)-mediated pathway of programmed cell death in plant immunity. The polypeptide is MACPF domain-containing protein At4g24290 (Arabidopsis thaliana (Mouse-ear cress)).